We begin with the raw amino-acid sequence, 554 residues long: Glucose-6-phosphate isomerase (554 aa).

E359 serves as the catalytic Proton donor. Active-site residues include H390 and K518.

This sequence belongs to the GPI family.

It localises to the cytoplasm. The enzyme catalyses alpha-D-glucose 6-phosphate = beta-D-fructose 6-phosphate. It functions in the pathway carbohydrate biosynthesis; gluconeogenesis. Its pathway is carbohydrate degradation; glycolysis; D-glyceraldehyde 3-phosphate and glycerone phosphate from D-glucose: step 2/4. Functionally, catalyzes the reversible isomerization of glucose-6-phosphate to fructose-6-phosphate. In Pseudomonas fluorescens (strain ATCC BAA-477 / NRRL B-23932 / Pf-5), this protein is Glucose-6-phosphate isomerase.